A 372-amino-acid polypeptide reads, in one-letter code: UDP-N-acetylglucosamine--N-acetylmuramyl-(pentapeptide) pyrophosphoryl-undecaprenol N-acetylglucosamine transferase (372 aa).

Residues 15–17, N126, R169, S197, and Q299 contribute to the UDP-N-acetyl-alpha-D-glucosamine site; that span reads TGG.

Belongs to the glycosyltransferase 28 family. MurG subfamily.

It is found in the cell inner membrane. The catalysed reaction is di-trans,octa-cis-undecaprenyl diphospho-N-acetyl-alpha-D-muramoyl-L-alanyl-D-glutamyl-meso-2,6-diaminopimeloyl-D-alanyl-D-alanine + UDP-N-acetyl-alpha-D-glucosamine = di-trans,octa-cis-undecaprenyl diphospho-[N-acetyl-alpha-D-glucosaminyl-(1-&gt;4)]-N-acetyl-alpha-D-muramoyl-L-alanyl-D-glutamyl-meso-2,6-diaminopimeloyl-D-alanyl-D-alanine + UDP + H(+). It functions in the pathway cell wall biogenesis; peptidoglycan biosynthesis. Its function is as follows. Cell wall formation. Catalyzes the transfer of a GlcNAc subunit on undecaprenyl-pyrophosphoryl-MurNAc-pentapeptide (lipid intermediate I) to form undecaprenyl-pyrophosphoryl-MurNAc-(pentapeptide)GlcNAc (lipid intermediate II). This chain is UDP-N-acetylglucosamine--N-acetylmuramyl-(pentapeptide) pyrophosphoryl-undecaprenol N-acetylglucosamine transferase, found in Methylobacterium sp. (strain 4-46).